A 750-amino-acid chain; its full sequence is Coiled-coil domain-containing protein 142 (750 aa).

The interval 1-29 (MAQASRSGSLPPLVIVPPLRAQPGGTGEE) is disordered. Residues 87 to 110 (ALQRLRAVLLRLHREREQLLQARD) adopt a coiled-coil conformation. Positions 687–714 (LEPPLQPGTSPAQTGQLQSTLGGRGPSP) are disordered. Residues 693 to 707 (PGTSPAQTGQLQSTL) show a composition bias toward polar residues.

The chain is Coiled-coil domain-containing protein 142 (CCDC142) from Homo sapiens (Human).